A 96-amino-acid chain; its full sequence is Small ribosomal subunit protein bS16 (96 aa).

Belongs to the bacterial ribosomal protein bS16 family.

The protein is Small ribosomal subunit protein bS16 of Vesicomyosocius okutanii subsp. Calyptogena okutanii (strain HA).